The primary structure comprises 419 residues: UPF0229 protein TERTU_3150 (419 aa).

Residues 63–111 form a disordered region; that stretch reads IFHHGSGGKNNRVLPGNDRFNGGDHIERPEQGQGGGGNGSGASDSGEGE. Basic and acidic residues predominate over residues 83-92; the sequence is NGGDHIERPE.

This sequence belongs to the UPF0229 family.

This chain is UPF0229 protein TERTU_3150, found in Teredinibacter turnerae (strain ATCC 39867 / T7901).